The sequence spans 237 residues: ATP synthase subunit a (237 aa).

6 helical membrane passes run 18–38 (STLW…VGTL), 77–97 (IFTL…PMAF), 103–123 (IAVT…LGFM), 132–152 (LFWV…IEVI), 185–205 (LILF…AIVA), and 209–229 (LEIL…CVYL).

The protein belongs to the ATPase A chain family. As to quaternary structure, F-type ATPases have 2 components, CF(1) - the catalytic core - and CF(0) - the membrane proton channel. CF(1) has five subunits: alpha(3), beta(3), gamma(1), delta(1), epsilon(1). CF(0) has three main subunits: a(1), b(2) and c(9-12). The alpha and beta chains form an alternating ring which encloses part of the gamma chain. CF(1) is attached to CF(0) by a central stalk formed by the gamma and epsilon chains, while a peripheral stalk is formed by the delta and b chains.

The protein resides in the cellular chromatophore membrane. Key component of the proton channel; it plays a direct role in the translocation of protons across the membrane. In Rhodobacter capsulatus (Rhodopseudomonas capsulata), this protein is ATP synthase subunit a.